A 1762-amino-acid polypeptide reads, in one-letter code: MECCRRATPGTLLLFLAFLLLSSRTARSEEDRDGLWDAWGPWSECSRTCGGGASYSLRRCLSSKSCEGRNIRYRTCSNVDCPPEAGDFRAQQCSAHNDVKHHGQFYEWLPVSNDPDNPCSLKCQAKGTTLVVELAPKVLDGTRCYTESLDMCISGLCQIVGCDHQLGSTVKEDNCGVCNGDGSTCRLVRGQYKSQLSATKSDDTVVAIPYGSRHIRLVLKGPDHLYLETKTLQGTKGENSLSSTGTFLVDNSSVDFQKFPDKEILRMAGPLTADFIVKIRNSGSADSTVQFIFYQPIIHRWRETDFFPCSATCGGGYQLTSAECYDLRSNRVVADQYCHYYPENIKPKPKLQECNLDPCPASDGYKQIMPYDLYHPLPRWEATPWTACSSSCGGGIQSRAVSCVEEDIQGHVTSVEEWKCMYTPKMPIAQPCNIFDCPKWLAQEWSPCTVTCGQGLRYRVVLCIDHRGMHTGGCSPKTKPHIKEECIVPTPCYKPKEKLPVEAKLPWFKQAQELEEGAAVSEEPSFIPEAWSACTVTCGVGTQVRIVRCQVLLSFSQSVADLPIDECEGPKPASQRACYAGPCSGEIPEFNPDETDGLFGGLQDFDELYDWEYEGFTKCSESCGGGVQEAVVSCLNKQTREPAEENLCVTSRRPPQLLKSCNLDPCPARWEIGKWSPCSLTCGVGLQTRDVFCSHLLSREMNETVILADELCRQPKPSTVQACNRFNCPPAWYPAQWQPCSRTCGGGVQKREVLCKQRMADGSFLELPETFCSASKPACQQACKKDDCPSEWLLSDWTECSTSCGEGTQTRSAICRKMLKTGLSTVVNSTLCPPLPFSSSIRPCMLATCARPGRPSTKHSPHIAAARKVYIQTRRQRKLHFVVGGFAYLLPKTAVVLRCPARRVRKPLITWEKDGQHLISSTHVTVAPFGYLKIHRLKPSDAGVYTCSAGPAREHFVIKLIGGNRKLVARPLSPRSEEEVLAGRKGGPKEALQTHKHQNGIFSNGSKAEKRGLAANPGSRYDDLVSRLLEQGGWPGELLASWEAQDSAERNTTSEEDPGAEQVLLHLPFTMVTEQRRLDDILGNLSQQPEELRDLYSKHLVAQLAQEIFRSHLEHQDTLLKPSERRTSPVTLSPHKHVSGFSSSLRTSSTGDAGGGSRRPHRKPTILRKISAAQQLSASEVVTHLGQTVALASGTLSVLLHCEAIGHPRPTISWARNGEEVQFSDRILLQPDDSLQILAPVEADVGFYTCNATNALGYDSVSIAVTLAGKPLVKTSRMTVINTEKPAVTVDIGSTIKTVQGVNVTINCQVAGVPEAEVTWFRNKSKLGSPHHLHEGSLLLTNVSSSDQGLYSCRAANLHGELTESTQLLILDPPQVPTQLEDIRALLAATGPNLPSVLTSPLGTQLVLDPGNSALLGCPIKGHPVPNITWFHGGQPIVTATGLTHHILAAGQILQVANLSGGSQGEFSCLAQNEAGVLMQKASLVIQDYWWSVDRLATCSASCGNRGVQQPRLRCLLNSTEVNPAHCAGKVRPAVQPIACNRRDCPSRWMVTSWSACTRSCGGGVQTRRVTCQKLKASGISTPVSNDMCTQVAKRPVDTQACNQQLCVEWAFSSWGQCNGPCIGPHLAVQHRQVFCQTRDGITLPSEQCSALPRPVSTQNCWSEACSVHWRVSLWTLCTATCGNYGFQSRRVECVHARTNKAVPEHLCSWGPRPANWQRCNITPCENMECRDTTRYCEKVKQLKLCQLSQFKSRCCGTCGKA.

The signal sequence occupies residues 1-28 (MECCRRATPGTLLLFLAFLLLSSRTARS). The region spanning 33-82 (DGLWDAWGPWSECSRTCGGGASYSLRRCLSSKSCEGRNIRYRTCSNVDCP) is the TSP type-1 1 domain. C-linked (Man) tryptophan glycosylation is found at Trp-39 and Trp-42. Cystine bridges form between Cys-45/Cys-76, Cys-49/Cys-81, and Cys-60/Cys-66. Thr-48 is a glycosylation site (O-linked (Fuc...) threonine). Asn-251 is a glycosylation site (N-linked (GlcNAc...) asparagine). A glycan (O-linked (Fuc...) threonine) is linked at Thr-312. TSP type-1 domains follow at residues 376–424 (PLPR…MYTP), 436–493 (DCPK…TPCY), 522–584 (EEPS…GPCS), 607–665 (ELYD…NLDP), 666–729 (CPAR…FNCP), and 788–850 (CPSE…ATCA). The O-linked (Fuc...) serine glycan is linked to Ser-391. A glycan (O-linked (Fuc...) threonine) is linked at Thr-451. Intrachain disulfides connect Cys-534-Cys-578, Cys-538-Cys-583, and Cys-549-Cys-567. Cystine bridges form between Cys-678–Cys-723, Cys-682–Cys-728, Cys-693–Cys-712, Cys-800–Cys-844, Cys-804–Cys-849, Cys-815–Cys-832, and Cys-899–Cys-947. One can recognise an Ig-like C2-type 1 domain in the interval 861–963 (PHIAAARKVY…EHFVIKLIGG (103 aa)). Residues 1120–1164 (LKPSERRTSPVTLSPHKHVSGFSSSLRTSSTGDAGGGSRRPHRKP) form a disordered region. The span at 1139–1151 (SGFSSSLRTSSTG) shows a compositional bias: low complexity. Ig-like C2-type domains lie at 1164 to 1266 (PTIL…IAVT), 1286 to 1369 (PAVT…TQLL), and 1395 to 1485 (PSVL…ASLV). 3 cysteine pairs are disulfide-bonded: Cys-1202-Cys-1250, Cys-1308-Cys-1353, and Cys-1418-Cys-1469. TSP type-1 domains follow at residues 1545 to 1608 (CPSR…QLCV) and 1666 to 1726 (CSVH…TPCE). The PLAC domain maps to 1726-1762 (ENMECRDTTRYCEKVKQLKLCQLSQFKSRCCGTCGKA).

As to quaternary structure, monomer. Post-translationally, C-, N- and O-glycosylated. O-fucosylated by POFUT2 on a serine or a threonine residue found within the consensus sequence C1-X(2)-(S/T)-C2-G of the TSP type-1 repeat domains where C1 and C2 are the first and second cysteine residue of the repeat, respectively. Fucosylated repeats can then be further glycosylated by the addition of a beta-1,3-glucose residue by the glucosyltransferase, B3GALTL. Fucosylation mediates the efficient secretion of ADAMTSL1. Can also be C-glycosylated with one or two mannose molecules on tryptophan residues within the consensus sequence W-X-X-W of the TPRs, and N-glycosylated. These other glycosylations can also facilitate secretion. Disulfide bonds are present. In terms of tissue distribution, expressed primarily in adult skeletal muscle.

The protein localises to the secreted. The protein resides in the extracellular space. It is found in the extracellular matrix. This chain is ADAMTS-like protein 1 (ADAMTSL1), found in Homo sapiens (Human).